Here is a 520-residue protein sequence, read N- to C-terminus: DDB1- and CUL4-associated factor 17 (520 aa).

Transmembrane regions (helical) follow at residues 186–206 (VLLY…ILEI) and 222–242 (GILI…QTIA).

Interacts with DDB1, CUL4A and CUL4B. Ubiquitously expressed.

The protein resides in the membrane. Its subcellular location is the nucleus. It localises to the nucleolus. The protein operates within protein modification; protein ubiquitination. In terms of biological role, may function as a substrate receptor for CUL4-DDB1 E3 ubiquitin-protein ligase complex. In Homo sapiens (Human), this protein is DDB1- and CUL4-associated factor 17 (DCAF17).